Consider the following 167-residue polypeptide: Swarming motility protein SwrB (167 aa).

A disordered region spans residues 63 to 105 (IENKASSASQSDEESQKSGLQTSETYQERDPVQEAENLPEHIE). A compositionally biased stretch (basic and acidic residues) spans 88-105 (YQERDPVQEAENLPEHIE).

Its function is as follows. Required for swarming motility and for maximal sigma-D activity. The polypeptide is Swarming motility protein SwrB (swrB) (Bacillus subtilis (strain 168)).